Consider the following 288-residue polypeptide: Phosphatidylserine decarboxylase proenzyme (288 aa).

Active-site charge relay system; for autoendoproteolytic cleavage activity residues include Asp88, His145, and Ser248. Ser248 functions as the Schiff-base intermediate with substrate; via pyruvic acid; for decarboxylase activity in the catalytic mechanism. Ser248 carries the post-translational modification Pyruvic acid (Ser); by autocatalysis.

The protein belongs to the phosphatidylserine decarboxylase family. PSD-B subfamily. Prokaryotic type I sub-subfamily. As to quaternary structure, heterodimer of a large membrane-associated beta subunit and a small pyruvoyl-containing alpha subunit. It depends on pyruvate as a cofactor. Is synthesized initially as an inactive proenzyme. Formation of the active enzyme involves a self-maturation process in which the active site pyruvoyl group is generated from an internal serine residue via an autocatalytic post-translational modification. Two non-identical subunits are generated from the proenzyme in this reaction, and the pyruvate is formed at the N-terminus of the alpha chain, which is derived from the carboxyl end of the proenzyme. The autoendoproteolytic cleavage occurs by a canonical serine protease mechanism, in which the side chain hydroxyl group of the serine supplies its oxygen atom to form the C-terminus of the beta chain, while the remainder of the serine residue undergoes an oxidative deamination to produce ammonia and the pyruvoyl prosthetic group on the alpha chain. During this reaction, the Ser that is part of the protease active site of the proenzyme becomes the pyruvoyl prosthetic group, which constitutes an essential element of the active site of the mature decarboxylase.

The protein localises to the cell membrane. It carries out the reaction a 1,2-diacyl-sn-glycero-3-phospho-L-serine + H(+) = a 1,2-diacyl-sn-glycero-3-phosphoethanolamine + CO2. Its pathway is phospholipid metabolism; phosphatidylethanolamine biosynthesis; phosphatidylethanolamine from CDP-diacylglycerol: step 2/2. In terms of biological role, catalyzes the formation of phosphatidylethanolamine (PtdEtn) from phosphatidylserine (PtdSer). The chain is Phosphatidylserine decarboxylase proenzyme from Azoarcus sp. (strain BH72).